We begin with the raw amino-acid sequence, 375 residues long: Growth/differentiation factor 8 (375 aa).

A signal peptide spans 1 to 18; the sequence is MQKLQIFVYIYLFVLIVA. Positions 19-266 are excised as a propeptide; that stretch reads GPVDLNENSE…VTDTPKRSRR (248 aa). Asn-48 and Asn-71 each carry an N-linked (GlcNAc...) asparagine glycan. 4 cysteine pairs are disulfide-bonded: Cys-272–Cys-282, Cys-281–Cys-340, Cys-309–Cys-372, and Cys-313–Cys-374.

The protein belongs to the TGF-beta family. Homodimer; disulfide-linked. Interacts with WFIKKN2, leading to inhibit its activity. Interacts with FSTL3. Post-translationally, synthesized as large precursor molecule that undergoes proteolytic cleavage to generate an N-terminal propeptide and a disulfide linked C-terminal dimer, which is the biologically active molecule. The circulating form consists of a latent complex of the C-terminal dimer and other proteins, including its propeptide, which maintain the C-terminal dimer in a latent, inactive state. Ligand activation requires additional cleavage of the prodomain by a tolloid-like metalloproteinase.

The protein resides in the secreted. Acts specifically as a negative regulator of skeletal muscle growth. This Aepyceros melampus (Impala) protein is Growth/differentiation factor 8 (MSTN).